The primary structure comprises 493 residues: Flagellin (493 aa).

The protein belongs to the bacterial flagellin family.

Its subcellular location is the secreted. The protein localises to the bacterial flagellum. Its function is as follows. Flagellin is the subunit protein which polymerizes to form the filaments of bacterial flagella. This is Flagellin (fliC) from Salmonella rubislaw.